Here is an 86-residue protein sequence, read N- to C-terminus: UPF0335 protein BR1752/BS1330_I1746 (86 aa).

It belongs to the UPF0335 family.

The chain is UPF0335 protein BR1752/BS1330_I1746 from Brucella suis biovar 1 (strain 1330).